Reading from the N-terminus, the 258-residue chain is Acyl-[acyl-carrier-protein]--UDP-N-acetylglucosamine O-acyltransferase (258 aa).

It belongs to the transferase hexapeptide repeat family. LpxA subfamily. As to quaternary structure, homotrimer.

The protein resides in the cytoplasm. It carries out the reaction a (3R)-hydroxyacyl-[ACP] + UDP-N-acetyl-alpha-D-glucosamine = a UDP-3-O-[(3R)-3-hydroxyacyl]-N-acetyl-alpha-D-glucosamine + holo-[ACP]. Its pathway is glycolipid biosynthesis; lipid IV(A) biosynthesis; lipid IV(A) from (3R)-3-hydroxytetradecanoyl-[acyl-carrier-protein] and UDP-N-acetyl-alpha-D-glucosamine: step 1/6. Functionally, involved in the biosynthesis of lipid A, a phosphorylated glycolipid that anchors the lipopolysaccharide to the outer membrane of the cell. This Pseudomonas aeruginosa (strain LESB58) protein is Acyl-[acyl-carrier-protein]--UDP-N-acetylglucosamine O-acyltransferase.